A 723-amino-acid polypeptide reads, in one-letter code: Polyribonucleotide nucleotidyltransferase (723 aa).

Mg(2+) contacts are provided by aspartate 488 and aspartate 494. Positions proline 555–isoleucine 614 constitute a KH domain. The S1 motif domain maps to glycine 624–lysine 692. The interval lysine 692–lysine 723 is disordered. Positions alanine 693–lysine 723 are enriched in basic and acidic residues.

It belongs to the polyribonucleotide nucleotidyltransferase family. The cofactor is Mg(2+).

Its subcellular location is the cytoplasm. The catalysed reaction is RNA(n+1) + phosphate = RNA(n) + a ribonucleoside 5'-diphosphate. In terms of biological role, involved in mRNA degradation. Catalyzes the phosphorolysis of single-stranded polyribonucleotides processively in the 3'- to 5'-direction. The polypeptide is Polyribonucleotide nucleotidyltransferase (Listeria innocua serovar 6a (strain ATCC BAA-680 / CLIP 11262)).